The chain runs to 592 residues: K(+) efflux antiporter 4 (592 aa).

An N-terminal signal peptide occupies residues 1-35; sequence MRRCKNNTDKFSVITMRLLTLLLICTFFFFFSFAY. 12 consecutive transmembrane segments (helical) span residues 169–189, 193–213, 221–241, 248–268, 279–299, 313–333, 343–363, 388–408, 437–457, 462–482, 491–511, and 535–555; these read LISDLVVVIVSATCGGIAFAC, PVITGYLLAGSIIGPGGLSFV, TVAQFGVIFLLFALGLEFSAA, AVAIPGGLLQIFLFMCLSGIT, GIFVGAFLSMSSTAVVLKFLM, VGTLILQDCAVGLLFALLPVL, VLSMAKSLAILIAFLGALFVL, LAAVAFCLLVAWCSDKLGLSL, NFFAALFLASIGMLIHMHFLW, ILLAAVLLVIVIKTVVVAIVV, TAVLVGMSLAQIGEFAFVLLS, and LVTTPLLFKLIPAVVHLGVLL.

Belongs to the monovalent cation:proton antiporter 2 (CPA2) transporter (TC 2.A.37) family. KEA (TC 2.A.37.1) subfamily. As to expression, expressed in roots, stems, leaves, flowers and silique.

It is found in the golgi apparatus membrane. The protein localises to the golgi apparatus. Its subcellular location is the trans-Golgi network membrane. It localises to the prevacuolar compartment membrane. The protein resides in the endomembrane system. It carries out the reaction K(+)(in) + H(+)(out) = K(+)(out) + H(+)(in). Its function is as follows. Electroneutral K(+)/H(+) efflux antiporter involved in K(+) homeostasis and osmotic adjustment. Together with KEA5 and KEA6, promotes growth and development, and facilitates endosomal pH and ions homeostasis, as well as salt tolerance (e.g. K(+), NaCl and LiCl), probably by supporting cell wall biosynthesis during rapid etiolated seedling growth. The polypeptide is K(+) efflux antiporter 4 (Arabidopsis thaliana (Mouse-ear cress)).